Here is a 131-residue protein sequence, read N- to C-terminus: Acanthoscurrin-2 (131 aa).

Residue K130 is modified to Lysine amide.

Expressed in hemocytes and secreted into the plasma following bacterial immune challenge.

The protein localises to the secreted. Antimicrobial protein. Strong activity against the Gram-negative bacterium E.coli SBS363 and yeast C.albicans. No detectable activity against the Gram-positive bacterium M.luteus. This Acanthoscurria gomesiana (Tarantula spider) protein is Acanthoscurrin-2.